We begin with the raw amino-acid sequence, 278 residues long: Tryptophan synthase alpha chain (278 aa).

Catalysis depends on proton acceptor residues Glu50 and Asp61.

This sequence belongs to the TrpA family. In terms of assembly, tetramer of two alpha and two beta chains.

It carries out the reaction (1S,2R)-1-C-(indol-3-yl)glycerol 3-phosphate + L-serine = D-glyceraldehyde 3-phosphate + L-tryptophan + H2O. It participates in amino-acid biosynthesis; L-tryptophan biosynthesis; L-tryptophan from chorismate: step 5/5. In terms of biological role, the alpha subunit is responsible for the aldol cleavage of indoleglycerol phosphate to indole and glyceraldehyde 3-phosphate. This chain is Tryptophan synthase alpha chain, found in Afipia carboxidovorans (strain ATCC 49405 / DSM 1227 / KCTC 32145 / OM5) (Oligotropha carboxidovorans).